Here is a 294-residue protein sequence, read N- to C-terminus: UDP-3-O-acyl-N-acetylglucosamine deacetylase (294 aa).

3 residues coordinate Zn(2+): H75, H232, and D236. The active-site Proton donor is the H259.

It belongs to the LpxC family. Zn(2+) serves as cofactor.

The enzyme catalyses a UDP-3-O-[(3R)-3-hydroxyacyl]-N-acetyl-alpha-D-glucosamine + H2O = a UDP-3-O-[(3R)-3-hydroxyacyl]-alpha-D-glucosamine + acetate. It functions in the pathway glycolipid biosynthesis; lipid IV(A) biosynthesis; lipid IV(A) from (3R)-3-hydroxytetradecanoyl-[acyl-carrier-protein] and UDP-N-acetyl-alpha-D-glucosamine: step 2/6. In terms of biological role, catalyzes the hydrolysis of UDP-3-O-myristoyl-N-acetylglucosamine to form UDP-3-O-myristoylglucosamine and acetate, the committed step in lipid A biosynthesis. This chain is UDP-3-O-acyl-N-acetylglucosamine deacetylase, found in Campylobacter curvus (strain 525.92).